A 161-amino-acid chain; its full sequence is Afimbrial adhesin AFA-I (161 aa).

The signal sequence occupies residues 1-21; the sequence is MKKLAIIGATSVMMMTGTAQA.

It belongs to the Dr-adhesin family.

It localises to the fimbrium. Functionally, hemagglutinins of uropathogenic E.coli mediate adherence to the upper urinary tract. These adhesins bind to the Dr blood group antigen and also agglutinate human erythrocytes in the presence of D-mannose (mannose-resistant hemagglutination (MRHA)). The sequence is that of Afimbrial adhesin AFA-I (afaE1) from Escherichia coli.